Here is a 357-residue protein sequence, read N- to C-terminus: Ribosomal RNA large subunit methyltransferase M (357 aa).

S-adenosyl-L-methionine is bound by residues S190, 223-226 (APGG), D242, D262, and D278. Catalysis depends on K307, which acts as the Proton acceptor.

It belongs to the class I-like SAM-binding methyltransferase superfamily. RNA methyltransferase RlmE family. RlmM subfamily. As to quaternary structure, monomer.

It is found in the cytoplasm. It catalyses the reaction cytidine(2498) in 23S rRNA + S-adenosyl-L-methionine = 2'-O-methylcytidine(2498) in 23S rRNA + S-adenosyl-L-homocysteine + H(+). Catalyzes the 2'-O-methylation at nucleotide C2498 in 23S rRNA. The polypeptide is Ribosomal RNA large subunit methyltransferase M (Chromohalobacter salexigens (strain ATCC BAA-138 / DSM 3043 / CIP 106854 / NCIMB 13768 / 1H11)).